A 375-amino-acid chain; its full sequence is Mitochondrial phosphate carrier protein 3, mitochondrial (375 aa).

Residues alanine 76 to valine 96 form a helical membrane-spanning segment. 3 Solcar repeats span residues alanine 76–threonine 160, tyrosine 173–methionine 257, and leucine 274–phenylalanine 353. Topologically, residues threonine 97–arginine 134 are mitochondrial matrix. A helical transmembrane segment spans residues glycine 135–tyrosine 154. The Mitochondrial intermembrane segment spans residues glutamate 155 to threonine 175. The chain crosses the membrane as a helical span at residues leucine 176–phenylalanine 196. The Mitochondrial matrix segment spans residues glutamate 197 to lysine 231. A helical transmembrane segment spans residues glycine 232 to phenylalanine 251. Residues glutamate 252–lysine 272 are Mitochondrial intermembrane-facing. Residues glycine 273–valine 293 form a helical membrane-spanning segment. The Mitochondrial matrix portion of the chain corresponds to serine 294–arginine 332. Residues isoleucine 333–phenylalanine 353 form a helical membrane-spanning segment. Topologically, residues valine 354–alanine 375 are mitochondrial intermembrane.

Belongs to the mitochondrial carrier (TC 2.A.29) family. As to expression, expressed in stems, leaves and flowers. Strong expression in vascular tissues.

It localises to the mitochondrion inner membrane. In terms of biological role, transport of phosphate groups from the cytosol to the mitochondrial matrix. Mediates salt stress tolerance through an ATP-dependent pathway and via modulation of the gibberellin metabolism. In Arabidopsis thaliana (Mouse-ear cress), this protein is Mitochondrial phosphate carrier protein 3, mitochondrial (MPT3).